A 449-amino-acid polypeptide reads, in one-letter code: Guanine nucleotide-binding protein alpha-2 subunit (449 aa).

The disordered stretch occupies residues 1-91 (MGLCASSEKN…TATANTSGSQ (91 aa)). Gly-2 carries N-myristoyl glycine lipidation. Residue Cys-4 is the site of S-palmitoyl cysteine attachment. Polar residues-rich tracts occupy residues 7-23 (SEKN…SAGS) and 38-48 (QKTVRTVNTAN). The span at 49 to 59 (QQEKQQQRQQQ) shows a compositional bias: low complexity. The segment covering 72–91 (NGSINNAISPTATANTSGSQ) has biased composition (polar residues). In terms of domain architecture, G-alpha spans 122-448 (KELKVLLLGA…ENTLKDSGVL (327 aa)). A G1 motif region spans residues 125–138 (KVLLLGAGESGKST). GTP contacts are provided by Glu-133, Ser-134, Gly-135, Lys-136, Ser-137, Thr-138, Asp-245, Leu-270, Thr-276, Gly-299, Asn-365, Lys-366, Asp-368, and Ala-420. Residue Ser-137 coordinates Mg(2+). The segment at 268–276 (DILRSRQMT) is G2 motif. Residue Thr-276 coordinates Mg(2+). The interval 292-301 (MHIYDVGGQR) is G3 motif. The interval 361–368 (VLFLNKID) is G4 motif. The G5 motif stretch occupies residues 418–423 (TQATDT).

This sequence belongs to the G-alpha family. G(q) subfamily. As to quaternary structure, g proteins are composed of 3 units; alpha, beta and gamma. The alpha chain contains the guanine nucleotide binding site. GPA2 interacts with the kelch repeat beta-mimic proteins GPB1 and GPB2 and with the gamma subunit GPG1. Interacts with the G protein coupled receptor GPR1. Also interacts with regulators of G protein signaling (RGS) protein RGS2. Requires Mg(2+) as cofactor. In terms of processing, myristoylation at Gly-2 and palmitoylation at Cys-4 are required for membrane localization and function of the protein.

It is found in the cell membrane. Alternates between an inactive form bound to GDP and an active form bound to GTP. Activated by the G protein coupled receptor (GPCR) GPR1, which serves as a guanine nucleotide-exchange factor (GEF), and inactivated by RGS2, acting as a GTPase-activating protein (GAP) for GPA2. Its function is as follows. Alpha subunit of the heterotrimeric guanine nucleotide-binding protein (G protein) involved in glucose-induced cAMP signaling. Binds to its cognate transmembrane receptor GPR1, which senses extracellular carbon sources, and activates cAMP-PKA signaling and governs diploid pseudohyphal differentiation and haploid invasive growth. The G protein beta-mimic proteins GPB1 and GPB2 inhibit GPA2-GPR1 coupling, probably to reduce signaling in the absence of glucose. The chain is Guanine nucleotide-binding protein alpha-2 subunit (GPA2) from Saccharomyces cerevisiae (strain ATCC 204508 / S288c) (Baker's yeast).